The chain runs to 323 residues: tRNA U34 carboxymethyltransferase (323 aa).

Residues Lys91, Trp105, Lys110, Gly130, 180–181 (IE), Met196, Tyr200, and Arg315 contribute to the carboxy-S-adenosyl-L-methionine site.

Belongs to the class I-like SAM-binding methyltransferase superfamily. CmoB family. In terms of assembly, homotetramer.

It catalyses the reaction carboxy-S-adenosyl-L-methionine + 5-hydroxyuridine(34) in tRNA = 5-carboxymethoxyuridine(34) in tRNA + S-adenosyl-L-homocysteine + H(+). Functionally, catalyzes carboxymethyl transfer from carboxy-S-adenosyl-L-methionine (Cx-SAM) to 5-hydroxyuridine (ho5U) to form 5-carboxymethoxyuridine (cmo5U) at position 34 in tRNAs. In Citrifermentans bemidjiense (strain ATCC BAA-1014 / DSM 16622 / JCM 12645 / Bem) (Geobacter bemidjiensis), this protein is tRNA U34 carboxymethyltransferase.